The sequence spans 559 residues: Oxygen-dependent choline dehydrogenase (559 aa).

4–33 contributes to the FAD binding site; it reads DYIIIGAGSAGNVLATRLTEDSDVTVLLLE. H473 acts as the Proton acceptor in catalysis.

The protein belongs to the GMC oxidoreductase family. The cofactor is FAD.

It catalyses the reaction choline + A = betaine aldehyde + AH2. The catalysed reaction is betaine aldehyde + NAD(+) + H2O = glycine betaine + NADH + 2 H(+). Its pathway is amine and polyamine biosynthesis; betaine biosynthesis via choline pathway; betaine aldehyde from choline (cytochrome c reductase route): step 1/1. Functionally, involved in the biosynthesis of the osmoprotectant glycine betaine. Catalyzes the oxidation of choline to betaine aldehyde and betaine aldehyde to glycine betaine at the same rate. This Cronobacter sakazakii (strain ATCC BAA-894) (Enterobacter sakazakii) protein is Oxygen-dependent choline dehydrogenase.